A 486-amino-acid chain; its full sequence is Malonate-semialdehyde dehydrogenase (486 aa).

NAD(+) contacts are provided by phenylalanine 154, lysine 178, glutamate 181, arginine 182, and serine 231. Catalysis depends on cysteine 286, which acts as the Nucleophile. Glutamate 386 provides a ligand contact to NAD(+).

It belongs to the aldehyde dehydrogenase family. IolA subfamily. Homotetramer.

It catalyses the reaction 3-oxopropanoate + NAD(+) + CoA + H2O = hydrogencarbonate + acetyl-CoA + NADH + H(+). It carries out the reaction 2-methyl-3-oxopropanoate + NAD(+) + CoA + H2O = propanoyl-CoA + hydrogencarbonate + NADH + H(+). Its pathway is polyol metabolism; myo-inositol degradation into acetyl-CoA; acetyl-CoA from myo-inositol: step 7/7. Functionally, catalyzes the oxidation of malonate semialdehyde (MSA) and methylmalonate semialdehyde (MMSA) into acetyl-CoA and propanoyl-CoA, respectively. Is involved in a myo-inositol catabolic pathway. Bicarbonate, and not CO2, is the end-product of the enzymatic reaction. This Bacillus cereus (strain B4264) protein is Malonate-semialdehyde dehydrogenase.